A 184-amino-acid chain; its full sequence is Ribosome maturation factor RimM (184 aa).

The region spanning proline 101 to leucine 174 is the PRC barrel domain.

The protein belongs to the RimM family. In terms of assembly, binds ribosomal protein uS19.

It is found in the cytoplasm. An accessory protein needed during the final step in the assembly of 30S ribosomal subunit, possibly for assembly of the head region. Essential for efficient processing of 16S rRNA. May be needed both before and after RbfA during the maturation of 16S rRNA. It has affinity for free ribosomal 30S subunits but not for 70S ribosomes. In Nocardioides sp. (strain ATCC BAA-499 / JS614), this protein is Ribosome maturation factor RimM.